The primary structure comprises 490 residues: Glutamate--tRNA ligase (490 aa).

The short motif at 13 to 23 is the 'HIGH' region element; the sequence is PSPTGTPHVGL. The short motif at 257–261 is the 'KMSKS' region element; it reads KLSKR. Lysine 260 contributes to the ATP binding site.

This sequence belongs to the class-I aminoacyl-tRNA synthetase family. Glutamate--tRNA ligase type 1 subfamily. In terms of assembly, monomer.

The protein localises to the cytoplasm. It catalyses the reaction tRNA(Glu) + L-glutamate + ATP = L-glutamyl-tRNA(Glu) + AMP + diphosphate. Its function is as follows. Catalyzes the attachment of glutamate to tRNA(Glu) in a two-step reaction: glutamate is first activated by ATP to form Glu-AMP and then transferred to the acceptor end of tRNA(Glu). In Mycobacterium tuberculosis (strain ATCC 25177 / H37Ra), this protein is Glutamate--tRNA ligase.